The sequence spans 101 residues: MRKALLISLILPILIGGLVAAAQAPQDTPQGFMGINIGAGLAVGLAAIGAGVAVGTAAAAGIGVLTEKREMFGTVLIFVAIGEGIAVYGIIFAVLMLFAGI.

Helical transmembrane passes span 4 to 24 (ALLI…AAQA), 32 to 52 (FMGI…GAGV), and 75 to 95 (VLIF…FAVL).

The protein belongs to the V-ATPase proteolipid subunit family. In terms of assembly, has multiple subunits with at least A(3), B(3), C, D, E, F, H, I and proteolipid K(x).

Its subcellular location is the cell membrane. Component of the A-type ATP synthase that produces ATP from ADP in the presence of a proton gradient across the membrane. This Sulfolobus acidocaldarius (strain ATCC 33909 / DSM 639 / JCM 8929 / NBRC 15157 / NCIMB 11770) protein is A-type ATP synthase subunit K.